Reading from the N-terminus, the 333-residue chain is Fructose-1,6-bisphosphatase class 1 (333 aa).

4 residues coordinate Mg(2+): E92, D113, L115, and D116. Substrate is bound by residues 116–119 (DGSS), N209, Y242, and K272. Position 278 (E278) interacts with Mg(2+).

The protein belongs to the FBPase class 1 family. As to quaternary structure, homotetramer. Mg(2+) serves as cofactor.

The protein localises to the cytoplasm. It carries out the reaction beta-D-fructose 1,6-bisphosphate + H2O = beta-D-fructose 6-phosphate + phosphate. Its pathway is carbohydrate biosynthesis; Calvin cycle. In Chlorobaculum parvum (strain DSM 263 / NCIMB 8327) (Chlorobium vibrioforme subsp. thiosulfatophilum), this protein is Fructose-1,6-bisphosphatase class 1.